The chain runs to 337 residues: ADP-ribosylation factor GTPase-activating protein AGD12 (337 aa).

Residues lysine 15–threonine 137 form the Arf-GAP domain. A C4-type zinc finger spans residues cysteine 30 to cysteine 53. The region spanning threonine 164–phenylalanine 281 is the C2 domain. Ca(2+) contacts are provided by aspartate 250, serine 253, and aspartate 256.

Ca(2+) is required as a cofactor. As to expression, expressed in roots, leaves, flowers and siliques. Low levels of expression in seeds and stems.

It localises to the golgi apparatus. Its subcellular location is the cell membrane. GTPase-activating protein (GAP) for ADP ribosylation factor (ARF). Binds phosphatidylinositol 3-monophosohate (PI-3-P) and anionic phospholipids. In Arabidopsis thaliana (Mouse-ear cress), this protein is ADP-ribosylation factor GTPase-activating protein AGD12 (AGD12).